The chain runs to 112 residues: Protein lin-52 homolog (112 aa).

This sequence belongs to the lin-52 family. As to quaternary structure, component of the DREAM complex.

In Tetraodon nigroviridis (Spotted green pufferfish), this protein is Protein lin-52 homolog (lin52).